The chain runs to 386 residues: Lipoyl synthase, mitochondrial (386 aa).

[4Fe-4S] cluster-binding residues include Cys110, Cys115, Cys121, Cys141, Cys145, Cys148, and Ser356. One can recognise a Radical SAM core domain in the interval 124–345 (GNDKSKATAT…KEQALEMGFL (222 aa)).

This sequence belongs to the radical SAM superfamily. Lipoyl synthase family. The cofactor is [4Fe-4S] cluster.

It localises to the mitochondrion. The enzyme catalyses [[Fe-S] cluster scaffold protein carrying a second [4Fe-4S](2+) cluster] + N(6)-octanoyl-L-lysyl-[protein] + 2 oxidized [2Fe-2S]-[ferredoxin] + 2 S-adenosyl-L-methionine + 4 H(+) = [[Fe-S] cluster scaffold protein] + N(6)-[(R)-dihydrolipoyl]-L-lysyl-[protein] + 4 Fe(3+) + 2 hydrogen sulfide + 2 5'-deoxyadenosine + 2 L-methionine + 2 reduced [2Fe-2S]-[ferredoxin]. It participates in protein modification; protein lipoylation via endogenous pathway; protein N(6)-(lipoyl)lysine from octanoyl-[acyl-carrier-protein]: step 2/2. Functionally, catalyzes the radical-mediated insertion of two sulfur atoms into the C-6 and C-8 positions of the octanoyl moiety bound to the lipoyl domains of lipoate-dependent enzymes, thereby converting the octanoylated domains into lipoylated derivatives. This Zygosaccharomyces rouxii (strain ATCC 2623 / CBS 732 / NBRC 1130 / NCYC 568 / NRRL Y-229) protein is Lipoyl synthase, mitochondrial.